Consider the following 296-residue polypeptide: Elongation factor Ts (296 aa).

The interval 81–84 (TDFV) is involved in Mg(2+) ion dislocation from EF-Tu.

This sequence belongs to the EF-Ts family.

The protein localises to the cytoplasm. Associates with the EF-Tu.GDP complex and induces the exchange of GDP to GTP. It remains bound to the aminoacyl-tRNA.EF-Tu.GTP complex up to the GTP hydrolysis stage on the ribosome. This is Elongation factor Ts from Ruthia magnifica subsp. Calyptogena magnifica.